We begin with the raw amino-acid sequence, 1043 residues long: MRRFKRKHLTAIDCQHLARSHLAVTQPFGQRWTNRDPNHGLYPKPRTKRGSRGQGSQRCIPEFFLAGKQPCTNDMAKSNSVGQDSCQDSEGDMIFPAESSCALPQEGSAGPGSPGSAPPSRKRSWSSEEESNQATGTSRWDGVSKKAPRHHLSVPCTRPREARQEAEDSTSRLSAESGETDQDAGDVGPDPIPDSYYGLLGTLPCQEALSHICSLPSEVLRHVFAFLPVEDLYWNLSLVCHLWREIISDPLFIPWKKLYHRYLMNEEQAVSKVDGILSNCGIEKESDLCVLNLIRYTATTKCSPSVDPERVLWSLRDHPLLPEAEACVRQHLPDLYAAAGGVNIWALVAAVVLLSSSVNDIQRLLFCLRRPSSTVTMPDVTETLYCIAVLLYAMREKGINISNRIHYNIFYCLYLQENSCTQATKVKEEPSVWPGKKTIQLTHEQQLILNHKMEPLQVVKIMAFAGTGKTSTLVKYAEKWSQSRFLYVTFNKSIAKQAERVFPSNVICKTFHSMAYGHIGRKYQSKKKLNLFKLTPFMVNSVLAEGKGGFIRAKLVCKTLENFFASADEELTIDHVPIWCKNSQGQRVMVEQSEKLNGVLEASRLWDNMRKLGECTEEAHQMTHDGYLKLWQLSKPSLASFDAIFVDEAQDCTPAIMNIVLSQPCGKIFVGDPHQQIYTFRGAVNALFTVPHTHVFYLTQSFRFGVEIAYVGATILDVCKRVRKKTLVGGNHQSGIRGDAKGQVALLSRTNANVFDEAVRVTEGEFPSRIHLIGGIKSFGLDRIIDIWILLQPEEERRKQNLVIKDKFIRRWVHKEGFSGFKRYVTAAEDKELEAKIAVVEKYNIRIPELVQRIEKCHIEDLDFAEYILGTVHKAKGLEFDTVHVLDDFVKVPCARHNLPQLPHFRVESFSEDEWNLLYVAVTRAKKRLIMTKSLENILTLAGEYFLQAELTSNVLKTGVVRCCVGQCNNAIPVDTVLTMKKLPITYSNRKENKGGYLCHSCAEQRIGPLAFLTASPEQVRAMERTVENIVLPRHEALLFLVF.

The disordered stretch occupies residues Gln30–Ser56. The PIP-box signature appears at Gln57–Phe64. The segment at Cys101 to Pro191 is disordered. Residue Ser124 is modified to Phosphoserine. Positions Ser138–Ala184 constitute an F-box domain. A compositionally biased stretch (basic and acidic residues) spans Arg158–Thr170. Residues Thr442 to Gly705 form the UvrD-like helicase ATP-binding domain. Ala463–Thr470 is a binding site for ATP. The short motif at Lys807 to Arg811 is the APIM motif element.

It belongs to the helicase family. UvrD subfamily. In terms of assembly, part of the SCF (SKP1-CUL1-F-box) E3 ubiquitin-protein ligase complex SCF(FBH1) composed of CUL1, SKP1, RBX1 and FBH1. Interacts with RAD51. Interacts with RPA2. Interacts (via PIP-box and RanBP2-type zinc finger) with PCNA. Post-translationally, ubiquitinated. Ubiquitination by the DCX(DTL) complex, also named CRL4(CDT2), leading to its degradation: ubiquitination takes place after its localization to DNA damage sites, possibly to facilitate the translesion synthesis (TLS) pathway.

It localises to the nucleus. Its subcellular location is the chromosome. The catalysed reaction is Couples ATP hydrolysis with the unwinding of duplex DNA by translocating in the 3'-5' direction.. It catalyses the reaction ATP + H2O = ADP + phosphate + H(+). It functions in the pathway protein modification; protein ubiquitination. 3'-5' DNA helicase and substrate-recognition component of the SCF(FBH1) E3 ubiquitin ligase complex that plays a key role in response to stalled/damaged replication forks. Involved in genome maintenance by acting as an anti-recombinogenic helicase and preventing extensive strand exchange during homologous recombination: promotes RAD51 filament dissolution from stalled forks, thereby inhibiting homologous recombination and preventing excessive recombination. Also promotes cell death and DNA double-strand breakage in response to replication stress: together with MUS81, promotes the endonucleolytic DNA cleavage following prolonged replication stress via its helicase activity, possibly to eliminate cells with excessive replication stress. Plays a major role in remodeling of stalled DNA forks by catalyzing fork regression, in which the fork reverses and the two nascent DNA strands anneal. In addition to the helicase activity, also acts as the substrate-recognition component of the SCF(FBH1) E3 ubiquitin ligase complex, a complex that mediates ubiquitination of RAD51, leading to regulate RAD51 subcellular location. This Homo sapiens (Human) protein is F-box DNA helicase 1.